The following is a 415-amino-acid chain: uncharacterized protein (415 aa).

[4Fe-4S] cluster is bound by residues Cys-66, Cys-72, Cys-75, and Cys-149. 4 residues coordinate S-adenosyl-L-methionine: Gln-249, Phe-276, Glu-296, and Asp-344. Catalysis depends on Cys-370, which acts as the Nucleophile.

The protein belongs to the class I-like SAM-binding methyltransferase superfamily. RNA M5U methyltransferase family.

This is an uncharacterized protein from Brucella suis biovar 1 (strain 1330).